The chain runs to 528 residues: Na(+)/H(+) antiporter NhaB (528 aa).

The Cytoplasmic portion of the chain corresponds to methionine 1–valine 23. The chain crosses the membrane as a helical span at residues alanine 24 to tryptophan 46. The Periplasmic portion of the chain corresponds to leucine 47–glutamate 95. A helical transmembrane segment spans residues valine 96–phenylalanine 118. The Cytoplasmic portion of the chain corresponds to threonine 119–threonine 129. The helical transmembrane segment at leucine 130–tyrosine 163 threads the bilayer. Topologically, residues serine 164–glutamate 239 are periplasmic. A helical membrane pass occupies residues phenylalanine 240–valine 262. The Cytoplasmic segment spans residues glutamate 263–aspartate 297. The helical transmembrane segment at valine 298–leucine 317 threads the bilayer. At histidine 318–alanine 320 the chain is on the periplasmic side. Residues alanine 321 to isoleucine 340 form a helical membrane-spanning segment. At glutamate 341–alanine 352 the chain is on the cytoplasmic side. The helical transmembrane segment at leucine 353–phenylalanine 375 threads the bilayer. Over lysine 376–glycine 389 the chain is Periplasmic. The helical transmembrane segment at threonine 390–glycine 412 threads the bilayer. Residues threonine 413–methionine 477 lie on the Cytoplasmic side of the membrane. Residues valine 478–leucine 500 traverse the membrane as a helical segment. Residues glutamate 501–histidine 528 lie on the Periplasmic side of the membrane.

Belongs to the NhaB Na(+)/H(+) (TC 2.A.34) antiporter family.

The protein resides in the cell inner membrane. It catalyses the reaction 2 Na(+)(in) + 3 H(+)(out) = 2 Na(+)(out) + 3 H(+)(in). Na(+)/H(+) antiporter that extrudes sodium in exchange for external protons. The polypeptide is Na(+)/H(+) antiporter NhaB (Vibrio alginolyticus).